A 2141-amino-acid chain; its full sequence is Oxygen-regulated protein 1 (2141 aa).

Residues 1–10 (MSETSSTSVS) show a composition bias toward polar residues. Positions 1 to 20 (MSETSSTSVSMIHRSFEGQG) are disordered. In terms of domain architecture, Doublecortin 1 spans 34–116 (KKISFYKSGD…RRKVQPVDLD (83 aa)). The disordered stretch occupies residues 126–149 (LSSRAISAHAQRSPPTSIGAAGAP). The region spanning 156 to 235 (RRLLVFRNGD…REPFKPGNYD (80 aa)) is the Doublecortin 2 domain. 3 disordered regions span residues 259-278 (RSES…SQIY), 1432-1458 (YTSS…SSER), and 1589-1612 (DWSE…GPNG). Polar residues predominate over residues 268–278 (HVPSSPRSQIY). Residues 1435 to 1444 (SDKEDSKTSE) are compositionally biased toward basic and acidic residues. 2 stretches are compositionally biased toward polar residues: residues 1448–1458 (SITNSMTSSER) and 1598–1610 (ENEQ…SDGP).

In terms of assembly, interacts (via the doublecortin domains) with microtubules. Interacts with RP1L1. Interacts with MAK.

The protein resides in the cytoplasm. The protein localises to the cytoskeleton. It is found in the cilium axoneme. Its subcellular location is the cell projection. It localises to the cilium. The protein resides in the photoreceptor outer segment. Functionally, microtubule-associated protein regulating the stability and length of the microtubule-based axoneme of photoreceptors. Required for the differentiation of photoreceptor cells, it plays a role in the organization of the outer segment of rod and cone photoreceptors ensuring the correct orientation and higher-order stacking of outer segment disks along the photoreceptor axoneme. In Canis lupus familiaris (Dog), this protein is Oxygen-regulated protein 1 (RP1).